The chain runs to 64 residues: Alpha-toxin Ts5 (64 aa).

Residues 2–64 (KDGYPVEGDN…KEPTKTSGRC (63 aa)) enclose the LCN-type CS-alpha/beta domain. 4 disulfide bridges follow: C12–C64, C16–C38, C24–C44, and C28–C46.

It belongs to the long (4 C-C) scorpion toxin superfamily. Sodium channel inhibitor family. Alpha subfamily. In terms of tissue distribution, expressed by the venom gland.

Its subcellular location is the secreted. In terms of biological role, alpha toxins bind voltage-independently at site-3 of sodium channels (Nav) and inhibit the inactivation of the activated channels, thereby blocking neuronal transmission. By extending the depolarized period it indirectly affects beta-cell voltage-dependent potassium channels, thus increasing potassium permeability. This Tityus serrulatus (Brazilian scorpion) protein is Alpha-toxin Ts5.